A 2024-amino-acid chain; its full sequence is Pericentriolar material 1 protein (2024 aa).

Positions 1–92 (MATGGGPFED…FPHSRYMSQM (92 aa)) are disordered. Ala2 is modified (N-acetylalanine). Residues 2–1460 (ATGGGPFEDG…TWIASNSELT (1459 aa)) form a mediates interaction with DZIP1 region. The segment covering 43-61 (RSSEKNKKKFGVESDKRVT) has biased composition (basic and acidic residues). Residues Ser65, Ser68, Ser69, Ser93, Ser110, Ser116, and Ser119 each carry the phosphoserine modification. Residues 111 to 163 (DLDQRSIGSDSQGRATAANNKRQLSENRKPFNFLPMQINTNKSKDASTNPPNR) are disordered. 2 stretches are compositionally biased toward polar residues: residues 116-132 (SIGSDSQGRATAANNKR) and 147-163 (QINTNKSKDASTNPPNR). Asn159 carries the phosphoserine; in variant Ser-159 modification. Residues 218 to 301 (KASSMREDLV…QLRALQGRQA (84 aa)) adopt a coiled-coil conformation. A disordered region spans residues 354–392 (RDSQPPAVPDNRRQAESLSLTREVSQSRKPSASERLPDE). A compositionally biased stretch (polar residues) spans 369–383 (ESLSLTREVSQSRKP). Position 370 is a phosphoserine (Ser370). A Phosphoserine; by PLK4 modification is found at Ser372. Ser384 is subject to Phosphoserine. The residue at position 399 (Lys399) is an N6-acetyllysine. A coiled-coil region spans residues 400-424 (MRVLQEKKQKMDKLLGELHTLRDQH). Disordered stretches follow at residues 421–492 (RDQH…KLQK) and 523–548 (ENRKDEETEESEYDSEHENSEPVTNI). 2 stretches are compositionally biased toward polar residues: residues 425–445 (LNNSSSSPQRSVDQRSTSAPS) and 456–477 (GESNSLTSSVPYPTASLVSQNE). A coiled-coil region spans residues 487–543 (SEKLQKLNEVRKRLNELRELVHYYEQTSDMMTDAVNENRKDEETEESEYDSEHENSE). Position 588 is a phosphoserine (Ser588). Disordered regions lie at residues 614–652 (HVAQGEDDEEEEEEAEEEGVSGASLSSHRSSLVDEHPED) and 699–726 (FYPAEEDTKQNSNNTRGNANKTQKDTGV). Residues 618–632 (GEDDEEEEEEAEEEG) are compositionally biased toward acidic residues. Positions 634–643 (SGASLSSHRS) are enriched in low complexity. Residue Ser643 is modified to Phosphoserine. Residues 651–682 (EDAEFEQKINRLMAAKQKLRQLQDLVAMVQDD) adopt a coiled-coil conformation. A compositionally biased stretch (polar residues) spans 708-719 (QNSNNTRGNANK). 2 coiled-coil regions span residues 726-769 (VNEK…LQTA) and 824-858 (SEMRRHEMLREELRQRRKQLEALMAEHQRRQGLAE). Thr859 is subject to Phosphothreonine. 4 positions are modified to phosphoserine: Ser861, Ser866, Ser869, and Ser872. The residue at position 877 (Thr877) is a Phosphothreonine. The interval 915 to 947 (TDEEEEEEQDASSNDNFSVCPSNSVNHNSYNGK) is disordered. The span at 925–946 (ASSNDNFSVCPSNSVNHNSYNG) shows a compositional bias: polar residues. Residues Ser960, Ser977, Ser988, and Ser991 each carry the phosphoserine modification. The stretch at 1063 to 1089 (TQLTWQQNNVQRLKQMLNELMRQQNQH) forms a coiled coil. 2 disordered regions span residues 1085–1109 (QQNQHPEKPGGKERGSSASHPPSPS) and 1152–1211 (FSQN…RTPW). The segment covering 1089–1099 (HPEKPGGKERG) has biased composition (basic and acidic residues). Polar residues predominate over residues 1152-1173 (FSQNISTPSEQQQPLAQNSSGK). Phosphoserine is present on residues Ser1185 and Ser1188. Residues 1192–1201 (EKPRNKKLPE) show a composition bias toward basic and acidic residues. Phosphoserine occurs at positions 1229 and 1231. Residues 1232–1246 (VEKSTSSNRKNQLDT) are compositionally biased toward polar residues. The disordered stretch occupies residues 1232 to 1342 (VEKSTSSNRK…RHSAQTEEPV (111 aa)). Ser1257, Ser1260, Ser1262, and Ser1263 each carry phosphoserine. The segment at 1279 to 1799 (TRKASAQASL…TQALTNYGSG (521 aa)) is interaction with HAP1. Residues 1296-1313 (KSKSKKRNSTQLKSRVKN) show a composition bias toward basic residues. Phosphoserine is present on residues Ser1318 and Ser1320. Thr1468 carries the post-translational modification Phosphothreonine. The stretch at 1515-1539 (IHLDQALARMREYERMKTEAESNSN) forms a coiled coil. Residues Ser1573, Ser1697, Ser1730, Ser1765, Ser1768, Ser1776, and Ser1782 each carry the phosphoserine modification. Disordered regions lie at residues 1725-1868 (LEDH…NNCP) and 1880-1944 (EQPL…PVLV). Positions 1768–1777 (SDQEEDEESE) are enriched in acidic residues. Residues 1783–1797 (INLSKAETQALTNYG) show a composition bias toward polar residues. Acidic residues predominate over residues 1799–1815 (GEDENEDEEMEEFEEGP). Residues 1818–1827 (VQTSLQANTE) show a composition bias toward polar residues. A compositionally biased stretch (basic and acidic residues) spans 1835 to 1860 (DEQVLQRDFKKTAESKNVPLEREATS). Over residues 1905–1916 (PLRLPEMEPLVP) the composition is skewed to low complexity. Positions 1913 to 2024 (PLVPRVKEVK…EPETVGAQSI (112 aa)) are interaction with BBS4. Residues 1924 to 1933 (AQETPESSLA) are compositionally biased toward polar residues. Ser1958 and Ser1977 each carry phosphoserine. The interval 2005-2024 (ELAGNSETLKEPETVGAQSI) is disordered.

The protein belongs to the PCM1 family. Self-associates. Interacts with C2CD3. Interacts with BBS4, BBS8, CETN3, HAP1, NDE1, NDEL1, MAP1LC3B, GABARAPAL2, and GABARAP. Interacts with CEP131; the interaction increases in response to ultraviolet light (UV) radiation. Associates with microtubule; association to microtubule is reduced in response to cellular stress, such as ultraviolet light (UV) radiation or heat shock, in a process that requires p38 MAP kinase signaling. Interacts with CFAP263. Interacts with SSX2IP. Interacts with CCDC13. Interacts with CEP290. Interacts with PARD6A. Interacts with KIAA0753/OFIP, CEP20/FOR20 and OFD1; the interaction with CEP20/FOR20 and OFD1 may be mediated by KIAA0753/OFIP. Interacts with CCDC66. Interacts with CCDC61. Interacts with DZIP1; localizes DZIP1 and the associated BBSome to centriolar satellite. Interacts with CSTPP1, TTLL1, TPGS1 and LRRC49. Interacts with CFAP53. In terms of processing, ubiquitinated. Undergoes monoubiquitination catalyzed by the E3 ubiquitin-protein ligase MIB1 in proliferating cells, preventing cilia formation. Monoubiquitination by MIB1 is inhibited in response to cellular stress, such as ultraviolet light (UV) radiation or heat shock, resulting in cilia formation initiation. Post-translationally, variant Ser-159 is phosphorylated. Phosphorylated on multiple serine and threonine residues by DYRK3 during the G2-to-M transition, after the nuclear-envelope breakdown. Phosphorylation by DYRK3 promotes disassembly of pericentriolar material. Phosphorylation at Ser-372 mediated by PLK4 is required to maintain the integrity of centriolar satellites. As to expression, expressed in blood, bone marrow, breast, lymph node, ovary and thyroid.

The protein localises to the cytoplasm. The protein resides in the cytoskeleton. It is found in the microtubule organizing center. Its subcellular location is the centrosome. It localises to the cytoplasmic granule. The protein localises to the centriolar satellite. The protein resides in the cilium basal body. Functionally, required for centrosome assembly and function. Essential for the correct localization of several centrosomal proteins including CEP250, CETN3, PCNT and NEK2. Required to anchor microtubules to the centrosome. Also involved in cilium biogenesis by recruiting the BBSome, a ciliary protein complex involved in cilium biogenesis, to the centriolar satellites. Recruits the tubulin polyglutamylase complex (TPGC) to centriolar satellites. This chain is Pericentriolar material 1 protein, found in Homo sapiens (Human).